Consider the following 200-residue polypeptide: MSIEVFNESGYDGVNEEMLIDVLSFALGEMDIHPDAEASIHIVDSDTIAELHVKWLDLEGPTDVMSFPMDELTPGYSRPDGGAPGPAMLGDIVLCPEFAEKQATKAGHDLSHELALLTVHGCLHLLGYDHVEPAQEREMFALQNELLADWYDDVDRRGVVYQPKPTGPGAFPTAADRLELDQTMIAEEQGEPGESGASAR.

Residues H120, H124, and H130 each contribute to the Zn(2+) site.

Belongs to the endoribonuclease YbeY family. It depends on Zn(2+) as a cofactor.

The protein localises to the cytoplasm. Its function is as follows. Single strand-specific metallo-endoribonuclease involved in late-stage 70S ribosome quality control and in maturation of the 3' terminus of the 16S rRNA. This is Endoribonuclease YbeY from Corynebacterium efficiens (strain DSM 44549 / YS-314 / AJ 12310 / JCM 11189 / NBRC 100395).